Reading from the N-terminus, the 151-residue chain is MSTPDNRSVNFFSLFRRGQHYAKTWPMEKRLAPVFVENRVIRMTRYAIRFMPPVAVFTLCWQIALGGQLGPAVATALFALSLPMQGLWWLGKRSVTPLPPSILNWFYEVRGKLQEAGQALAPVEGKPDYQALADTLKRAFKQLDKTFLDDL.

The next 2 helical transmembrane spans lie at 46-65 and 69-91; these read YAIR…QIAL and LGPA…WWLG.

The protein belongs to the UPF0208 family.

The protein resides in the cell inner membrane. The polypeptide is UPF0208 membrane protein YfbV (Salmonella choleraesuis (strain SC-B67)).